The sequence spans 671 residues: DNA ligase (671 aa).

NAD(+)-binding positions include 32–36 (DAEYD), 81–82 (SL), and Glu113. The active-site N6-AMP-lysine intermediate is the Lys115. NAD(+) is bound by residues Arg136, Glu173, Lys290, and Lys314. Residues Cys408, Cys411, Cys426, and Cys432 each coordinate Zn(2+). One can recognise a BRCT domain in the interval 593 to 671 (EIDSPFAGKT…EAEMLRLLGS (79 aa)).

It belongs to the NAD-dependent DNA ligase family. LigA subfamily. Requires Mg(2+) as cofactor. The cofactor is Mn(2+).

The enzyme catalyses NAD(+) + (deoxyribonucleotide)n-3'-hydroxyl + 5'-phospho-(deoxyribonucleotide)m = (deoxyribonucleotide)n+m + AMP + beta-nicotinamide D-nucleotide.. DNA ligase that catalyzes the formation of phosphodiester linkages between 5'-phosphoryl and 3'-hydroxyl groups in double-stranded DNA using NAD as a coenzyme and as the energy source for the reaction. It is essential for DNA replication and repair of damaged DNA. In Shigella boydii serotype 4 (strain Sb227), this protein is DNA ligase.